Consider the following 317-residue polypeptide: Thymidylate synthase (317 aa).

DUMP is bound by residues R24 and 179–180 (RR). Residue C199 is the Nucleophile of the active site. DUMP contacts are provided by residues 219 to 222 (RSAD), N230, and 260 to 262 (HIY). D222 is a (6R)-5,10-methylene-5,6,7,8-tetrahydrofolate binding site. A316 serves as a coordination point for (6R)-5,10-methylene-5,6,7,8-tetrahydrofolate.

This sequence belongs to the thymidylate synthase family. Bacterial-type ThyA subfamily. In terms of assembly, homodimer.

It is found in the cytoplasm. The catalysed reaction is dUMP + (6R)-5,10-methylene-5,6,7,8-tetrahydrofolate = 7,8-dihydrofolate + dTMP. Its pathway is pyrimidine metabolism; dTTP biosynthesis. Catalyzes the reductive methylation of 2'-deoxyuridine-5'-monophosphate (dUMP) to 2'-deoxythymidine-5'-monophosphate (dTMP) while utilizing 5,10-methylenetetrahydrofolate (mTHF) as the methyl donor and reductant in the reaction, yielding dihydrofolate (DHF) as a by-product. This enzymatic reaction provides an intracellular de novo source of dTMP, an essential precursor for DNA biosynthesis. This is Thymidylate synthase from Oceanobacillus iheyensis (strain DSM 14371 / CIP 107618 / JCM 11309 / KCTC 3954 / HTE831).